We begin with the raw amino-acid sequence, 443 residues long: UDP-N-acetylmuramate--L-alanine ligase (443 aa).

G110 to S116 is a binding site for ATP.

It belongs to the MurCDEF family.

It localises to the cytoplasm. It catalyses the reaction UDP-N-acetyl-alpha-D-muramate + L-alanine + ATP = UDP-N-acetyl-alpha-D-muramoyl-L-alanine + ADP + phosphate + H(+). Its pathway is cell wall biogenesis; peptidoglycan biosynthesis. Its function is as follows. Cell wall formation. This Streptococcus suis (strain 98HAH33) protein is UDP-N-acetylmuramate--L-alanine ligase.